The sequence spans 218 residues: Claudin-5 (218 aa).

Over 1–7 (MGSAALE) the chain is Cytoplasmic. The helical transmembrane segment at 8 to 28 (ILGLVLCLVGWGGLILACGLP) threads the bilayer. At 29–81 (MWQVTAFLDHNIVTAQTTWKGLWMSCVVQSTGHMQCKVYDSVLALSTEVQAAR) the chain is on the extracellular side. A helical membrane pass occupies residues 82-102 (ALTVSAVLLAFVALFVTLAGA). Residues 103 to 122 (QCTTCVAPGPAKARVALTGG) lie on the Cytoplasmic side of the membrane. The chain crosses the membrane as a helical span at residues 123 to 143 (VLYLFCGLLALVPLCWFANIV). Residues 144–159 (VREFYDPSVPVSQKYE) lie on the Extracellular side of the membrane. Residues 160-180 (LGAALYIGWAATALLMVGGCL) form a helical membrane-spanning segment. The Cytoplasmic portion of the chain corresponds to 181–218 (LCCGAWVCTGRPDLSFPVKYSAPRRPTATGDYDKKNYV). The interval 217–218 (YV) is interactions with TJP1, TJP2 and TJP3.

It belongs to the claudin family. In terms of assembly, directly interacts with TJP1/ZO-1, TJP2/ZO-2 and TJP3/ZO-3. Interacts with MPDZ.

It is found in the cell junction. It localises to the tight junction. Its subcellular location is the cell membrane. In terms of biological role, plays a major role in tight junction-specific obliteration of the intercellular space. The protein is Claudin-5 (CLDN5) of Homo sapiens (Human).